We begin with the raw amino-acid sequence, 246 residues long: tRNA pseudouridine synthase A (246 aa).

Asp-54 functions as the Nucleophile in the catalytic mechanism. Position 112 (Tyr-112) interacts with substrate.

The protein belongs to the tRNA pseudouridine synthase TruA family. Homodimer.

The enzyme catalyses uridine(38/39/40) in tRNA = pseudouridine(38/39/40) in tRNA. In terms of biological role, formation of pseudouridine at positions 38, 39 and 40 in the anticodon stem and loop of transfer RNAs. The protein is tRNA pseudouridine synthase A of Moorella thermoacetica (strain ATCC 39073 / JCM 9320).